Consider the following 265-residue polypeptide: Tryptophan synthase alpha chain (265 aa).

Residues Glu-49 and Asp-60 each act as proton acceptor in the active site.

This sequence belongs to the TrpA family. In terms of assembly, tetramer of two alpha and two beta chains.

The catalysed reaction is (1S,2R)-1-C-(indol-3-yl)glycerol 3-phosphate + L-serine = D-glyceraldehyde 3-phosphate + L-tryptophan + H2O. It functions in the pathway amino-acid biosynthesis; L-tryptophan biosynthesis; L-tryptophan from chorismate: step 5/5. In terms of biological role, the alpha subunit is responsible for the aldol cleavage of indoleglycerol phosphate to indole and glyceraldehyde 3-phosphate. The polypeptide is Tryptophan synthase alpha chain (Polynucleobacter necessarius subsp. necessarius (strain STIR1)).